The primary structure comprises 444 residues: tRNA (guanine-N(7)-)-methyltransferase non-catalytic subunit TRM82 (444 aa).

WD repeat units lie at residues 1–47 (MSVI…WSDD), 48–99 (FDKI…LGAP), 100–147 (PIYS…KRFC), 148–192 (FSKR…EPIL), 193–237 (GHVS…DKWL), 238–279 (FGHK…STFD), and 308–354 (FAVS…ITFP). The disordered stretch occupies residues 55-92 (RNTTAKEQQGQSSENENENKKLKSNKGDSIKRTAAKVP). Residues 71 to 85 (NENKKLKSNKGDSIK) are compositionally biased toward basic and acidic residues. Ser93 carries the phosphoserine modification.

It belongs to the WD repeat TRM82 family. As to quaternary structure, forms a heterodimer with the catalytic subunit TRM8.

It localises to the nucleus. The protein operates within tRNA modification; N(7)-methylguanine-tRNA biosynthesis. In terms of biological role, required for the formation of N(7)-methylguanine at position 46 (m7G46) in tRNA, a modification required to maintain stability of tRNAs; its absence resulting in tRNA decay. In the complex, it is required to stabilize and induce conformational changes of the catalytic subunit. This chain is tRNA (guanine-N(7)-)-methyltransferase non-catalytic subunit TRM82, found in Saccharomyces cerevisiae (strain RM11-1a) (Baker's yeast).